The chain runs to 300 residues: Protein phosphatase 2C 1 (300 aa).

In terms of domain architecture, PPM-type phosphatase spans 23–298 (IFAASEMQGW…DNMTTILVYL (276 aa)). Mn(2+) is bound by residues Asp57, Gly58, Asp237, and Asp289.

It belongs to the PP2C family. Mg(2+) serves as cofactor. It depends on Mn(2+) as a cofactor. Post-translationally, the N-terminus is blocked.

It localises to the membrane. It carries out the reaction O-phospho-L-seryl-[protein] + H2O = L-seryl-[protein] + phosphate. The enzyme catalyses O-phospho-L-threonyl-[protein] + H2O = L-threonyl-[protein] + phosphate. Serine and threonine phosphatase. In Paramecium tetraurelia, this protein is Protein phosphatase 2C 1.